Consider the following 848-residue polypeptide: Aryl hydrocarbon receptor (848 aa).

A propeptide spanning residues 1 to 9 (MSSGANITY) is cleaved from the precursor. Positions 1–38 (MSSGANITYASRKRRKPVQKTVKPIPAEGIKSNPSKRH) are disordered. Short sequence motifs (nuclear localization signal) lie at residues 12 to 15 (RKRR) and 36 to 41 (KRHRDR). The 54-residue stretch at 26-79 (PAEGIKSNPSKRHRDRLNTELDRLASLLPFPQDVINKLDKLSVLRLSVSYLRAK) folds into the bHLH domain. The tract at residues 37–65 (RHRDRLNTELDRLASLLPFPQDVINKLDK) is DNA-binding. Required for maintaining the overall integrity of the AHR:ARNT heterodimer and its transcriptional activity stretches follow at residues 49–81 (LASL…AKSF), 116–124 (LLQALNGFV), and 260–262 (FAI). A Nuclear export signal motif is present at residues 63–71 (LDKLSVLRL). In terms of domain architecture, PAS 1 spans 116 to 179 (LLQALNGFVL…RQLHWALNPD (64 aa)). The PAS 2 domain occupies 269–336 (PSILEIRTKN…CAESHIRMIK (68 aa)). Residues 342–380 (MTVFRLFAKHSRWRWVQSNARLIYRNGRPDYIIATQRPL) form the PAC domain. The interval 421–449 (LPIRTKSNTSRKDWAPQSTPSKDSFHPSS) is disordered. The segment covering 436-449 (PQSTPSKDSFHPSS) has biased composition (polar residues).

In terms of assembly, homodimer. Heterodimer; efficient DNA binding requires dimerization with another bHLH protein. Interacts with ARNT; the heterodimer ARNT:AHR binds to core DNA sequence 5'-TGCGTG-3' within the dioxin response element (DRE) of target gene promoters and activates their transcription. Binds MYBBP1A. Interacts with coactivators including SRC-1, RIP140 and NOCA7, and with the corepressor SMRT. Interacts with NEDD8 and IVNS1ABP. Interacts with BMAL1. Interacts with HSP90AB1. Interacts with TIPARP; leading to mono-ADP-ribosylation of AHR and subsequent inhibition of AHR. Post-translationally, mono-ADP-ribosylated, leading to inhibit transcription activator activity of AHR. Expressed in all tissues tested including brain, heart, kidney, liver, lung, muscle, ovary, skin, spleen and thymus.

It localises to the cytoplasm. The protein localises to the nucleus. Its function is as follows. Ligand-activated transcription factor that enables cells to adapt to changing conditions by sensing compounds from the environment, diet, microbiome and cellular metabolism, and which plays important roles in development, immunity and cancer. Upon ligand binding, translocates into the nucleus, where it heterodimerizes with ARNT and induces transcription by binding to xenobiotic response elements (XRE). Regulates a variety of biological processes, including angiogenesis, hematopoiesis, drug and lipid metabolism, cell motility and immune modulation. Xenobiotics can act as ligands: upon xenobiotic-binding, activates the expression of multiple phase I and II xenobiotic chemical metabolizing enzyme genes (such as the CYP1A1 gene). Mediates biochemical and toxic effects of halogenated aromatic hydrocarbons. Next to xenobiotics, natural ligands derived from plants, microbiota, and endogenous metabolism are potent AHR agonists. Tryptophan (Trp) derivatives constitute an important class of endogenous AHR ligands. Acts as a negative regulator of anti-tumor immunity: indoles and kynurenic acid generated by Trp catabolism act as ligand and activate AHR, thereby promoting AHR-driven cancer cell motility and suppressing adaptive immunity. Regulates the circadian clock by inhibiting the basal and circadian expression of the core circadian component PER1. Inhibits PER1 by repressing the CLOCK-BMAL1 heterodimer mediated transcriptional activation of PER1. The heterodimer ARNT:AHR binds to core DNA sequence 5'-TGCGTG-3' within the dioxin response element (DRE) of target gene promoters and activates their transcription. The sequence is that of Aryl hydrocarbon receptor (Ahr) from Mus musculus (Mouse).